Reading from the N-terminus, the 479-residue chain is Probable aspartic-type endopeptidase OPSB (479 aa).

Residues 1 to 19 form the signal peptide; sequence MRGDSFIWSLTTAASLLYA. The Peptidase A1 domain maps to 58 to 393; sequence SGKTVSQDLD…DLDNNEISIA (336 aa). N-linked (GlcNAc...) asparagine glycosylation is present at Asn68. The active site involves Asp76. N-linked (GlcNAc...) asparagine glycosylation is present at Asn121. The active site involves Asp275. The N-linked (GlcNAc...) asparagine glycan is linked to Asn398. Residues 435–454 form a disordered region; it reads LSGIETGVPGARPTSRGAAP. Gly451 is lipidated: GPI-anchor amidated glycine. The propeptide at 452–479 is removed in mature form; the sequence is AAPTMRPDVTFGVAAAGLAGAGILFAFM.

It belongs to the peptidase A1 family.

Its subcellular location is the cell membrane. In terms of biological role, probable GPI-anchored aspartic-type endopeptidase which contributes to virulence. This Arthroderma otae (strain ATCC MYA-4605 / CBS 113480) (Microsporum canis) protein is Probable aspartic-type endopeptidase OPSB (OPSB).